A 224-amino-acid chain; its full sequence is Ribose-5-phosphate isomerase A (224 aa).

Residues 26–29 (TGST), 81–84 (DGAD), and 94–97 (KGGG) each bind substrate. Glu103 serves as the catalytic Proton acceptor. Substrate is bound at residue Lys121.

Belongs to the ribose 5-phosphate isomerase family. In terms of assembly, homodimer.

The catalysed reaction is aldehydo-D-ribose 5-phosphate = D-ribulose 5-phosphate. It participates in carbohydrate degradation; pentose phosphate pathway; D-ribose 5-phosphate from D-ribulose 5-phosphate (non-oxidative stage): step 1/1. In terms of biological role, catalyzes the reversible conversion of ribose-5-phosphate to ribulose 5-phosphate. The protein is Ribose-5-phosphate isomerase A of Listeria monocytogenes serotype 4b (strain CLIP80459).